The sequence spans 376 residues: UDP-N-acetylenolpyruvoylglucosamine reductase (376 aa).

Residues 48 to 219 (VGGPARHLVI…LDVTMQFNLG (172 aa)) enclose the FAD-binding PCMH-type domain. Residue Arg-196 is part of the active site. Residue Ser-274 is the Proton donor of the active site. The active site involves Glu-368.

The protein belongs to the MurB family. FAD serves as cofactor.

The protein localises to the cytoplasm. It carries out the reaction UDP-N-acetyl-alpha-D-muramate + NADP(+) = UDP-N-acetyl-3-O-(1-carboxyvinyl)-alpha-D-glucosamine + NADPH + H(+). Its pathway is cell wall biogenesis; peptidoglycan biosynthesis. In terms of biological role, cell wall formation. The polypeptide is UDP-N-acetylenolpyruvoylglucosamine reductase (Cutibacterium acnes (strain DSM 16379 / KPA171202) (Propionibacterium acnes)).